A 256-amino-acid polypeptide reads, in one-letter code: uncharacterized protein (256 aa).

The next 2 membrane-spanning stretches (helical) occupy residues 181–201 and 231–251; these read CCII…ASMV and GIAV…GLIA.

The protein localises to the cell membrane. This is an uncharacterized protein from Methanocaldococcus jannaschii (strain ATCC 43067 / DSM 2661 / JAL-1 / JCM 10045 / NBRC 100440) (Methanococcus jannaschii).